The following is a 446-amino-acid chain: Neuropeptide Y receptor type 5 (446 aa).

The Extracellular segment spans residues 1–42; sequence MDLELQDFYNKTLATENNTAATRNSDFPVWDDYKSSVDDLQY. N10 and N17 each carry an N-linked (GlcNAc...) asparagine glycan. Residues 43-63 traverse the membrane as a helical segment; the sequence is FLIGLYTFVSLLGFMGNLLIL. At 64–77 the chain is on the cytoplasmic side; that stretch reads MALMRKRNQKTMVN. A helical transmembrane segment spans residues 78 to 98; the sequence is FLIGNLAFSDILVVLFCSPFT. At 99 to 117 the chain is on the extracellular side; it reads LTSVLLDQWMFGKVMCHIM. A disulfide bridge links C114 with C198. The chain crosses the membrane as a helical span at residues 118 to 138; sequence PFLQCVSVLVSTLILISIAIV. The Cytoplasmic segment spans residues 139–156; sequence RYHMIKHPISNNLTANHG. The chain crosses the membrane as a helical span at residues 157 to 177; sequence YFLIATVWTLGFAICSPLPVF. The Extracellular portion of the chain corresponds to 178–208; the sequence is HSLVELQETFDSALLSSRYLCVESWPSDSYR. A helical membrane pass occupies residues 209–229; the sequence is IAFTISLLLVQYILPLVCLTV. Topologically, residues 230 to 369 are cytoplasmic; it reads SHTSVCRSIS…KKRSRSVFYR (140 aa). The chain crosses the membrane as a helical span at residues 370–390; the sequence is LTILILVFAVSWMPLHLFHVV. Residues 391–407 lie on the Extracellular side of the membrane; that stretch reads TDFNDNLISNRHFKLVY. Residues 408–428 form a helical membrane-spanning segment; sequence CICHLLGMMSCCLNPILYGFL. Residues 429 to 446 lie on the Cytoplasmic side of the membrane; sequence NNGIKADLISLIQCLHMS. Residue C442 is the site of S-palmitoyl cysteine attachment.

This sequence belongs to the G-protein coupled receptor 1 family.

It localises to the cell membrane. Its function is as follows. Receptor for neuropeptide Y and peptide YY. The activity of this receptor is mediated by G proteins that inhibit adenylate cyclase activity. Seems to be associated with food intake. Could be involved in feeding disorders. The polypeptide is Neuropeptide Y receptor type 5 (NPY5R) (Canis lupus familiaris (Dog)).